A 317-amino-acid chain; its full sequence is Beta-ketoacyl-[acyl-carrier-protein] synthase III (317 aa).

Catalysis depends on residues cysteine 112 and histidine 244. The interval 245-249 is ACP-binding; it reads QANLR. Asparagine 274 is an active-site residue.

The protein belongs to the thiolase-like superfamily. FabH family. In terms of assembly, homodimer.

It is found in the cytoplasm. It catalyses the reaction malonyl-[ACP] + acetyl-CoA + H(+) = 3-oxobutanoyl-[ACP] + CO2 + CoA. It functions in the pathway lipid metabolism; fatty acid biosynthesis. Its function is as follows. Catalyzes the condensation reaction of fatty acid synthesis by the addition to an acyl acceptor of two carbons from malonyl-ACP. Catalyzes the first condensation reaction which initiates fatty acid synthesis and may therefore play a role in governing the total rate of fatty acid production. Possesses both acetoacetyl-ACP synthase and acetyl transacylase activities. Its substrate specificity determines the biosynthesis of branched-chain and/or straight-chain of fatty acids. The polypeptide is Beta-ketoacyl-[acyl-carrier-protein] synthase III (Serratia proteamaculans (strain 568)).